Reading from the N-terminus, the 143-residue chain is Transcriptional regulator MraZ (143 aa).

SpoVT-AbrB domains follow at residues 5 to 47 and 76 to 119; these read EYEH…TLEE and AIEV…DRET.

It belongs to the MraZ family. As to quaternary structure, forms oligomers.

The protein localises to the cytoplasm. The protein resides in the nucleoid. This is Transcriptional regulator MraZ from Staphylococcus haemolyticus (strain JCSC1435).